The primary structure comprises 281 residues: 1-acyl-sn-glycerol-3-phosphate acyltransferase (281 aa).

Transmembrane regions (helical) follow at residues I40 to L60, L71 to I91, and A110 to A130. The HXXXXD motif motif lies at H109–D114.

The protein belongs to the 1-acyl-sn-glycerol-3-phosphate acyltransferase family.

It is found in the membrane. It carries out the reaction a 1-acyl-sn-glycero-3-phosphate + an acyl-CoA = a 1,2-diacyl-sn-glycero-3-phosphate + CoA. The protein operates within phospholipid metabolism; CDP-diacylglycerol biosynthesis; CDP-diacylglycerol from sn-glycerol 3-phosphate: step 2/3. Converts lysophosphatidic acid (LPA) into phosphatidic acid by incorporating acyl moiety at the 2 position. This enzyme uses erucoyl-CoA as an acyl donor. The chain is 1-acyl-sn-glycerol-3-phosphate acyltransferase (PLSC) from Limnanthes douglasii (Douglas' meadowfoam).